The chain runs to 169 residues: ALK and LTK ligand 2a (169 aa).

The first 25 residues, 1-25 (MRALRAPVLVMGLVLLICTAAQSDA), serve as a signal peptide directing secretion. Residues 45-68 (ENSADDESAQKTESAPEPKDTHHL) form a disordered region. Residues 52-67 (SAQKTESAPEPKDTHH) show a composition bias toward basic and acidic residues. 2 disulfides stabilise this stretch: C130–C166 and C144–C153.

It belongs to the ALKAL family. In terms of assembly, homodimer. As to expression, expressed at high level in the notochord and iridophore stripes of the trunk, as well as in the eye and swim bladder.

The protein localises to the secreted. It is found in the cell membrane. In terms of biological role, cytokine that acts as a physiological ligand for receptor tyrosine kinases LTK and ALK. Required for neural crest cell differentiation and iridophore development during embryonic iridophore development and adult stripe development by acting as a receptor for LTK. This chain is ALK and LTK ligand 2a, found in Danio rerio (Zebrafish).